We begin with the raw amino-acid sequence, 337 residues long: tRNA N6-adenosine threonylcarbamoyltransferase (337 aa).

2 residues coordinate Fe cation: His111 and His115. Substrate-binding positions include 134-138, Asp167, Gly180, and Asn272; that span reads LVSGG. Asp300 lines the Fe cation pocket.

Belongs to the KAE1 / TsaD family. Fe(2+) serves as cofactor.

It is found in the cytoplasm. The enzyme catalyses L-threonylcarbamoyladenylate + adenosine(37) in tRNA = N(6)-L-threonylcarbamoyladenosine(37) in tRNA + AMP + H(+). Functionally, required for the formation of a threonylcarbamoyl group on adenosine at position 37 (t(6)A37) in tRNAs that read codons beginning with adenine. Is involved in the transfer of the threonylcarbamoyl moiety of threonylcarbamoyl-AMP (TC-AMP) to the N6 group of A37, together with TsaE and TsaB. TsaD likely plays a direct catalytic role in this reaction. The chain is tRNA N6-adenosine threonylcarbamoyltransferase from Klebsiella pneumoniae (strain 342).